Here is a 286-residue protein sequence, read N- to C-terminus: uncharacterized protein (286 aa).

Belongs to the NmrA-type oxidoreductase family.

This is an uncharacterized protein from Bacillus subtilis (strain 168).